The chain runs to 606 residues: Proline--tRNA ligase (606 aa).

The protein belongs to the class-II aminoacyl-tRNA synthetase family. ProS type 1 subfamily. Homodimer.

It is found in the cytoplasm. The enzyme catalyses tRNA(Pro) + L-proline + ATP = L-prolyl-tRNA(Pro) + AMP + diphosphate. In terms of biological role, catalyzes the attachment of proline to tRNA(Pro) in a two-step reaction: proline is first activated by ATP to form Pro-AMP and then transferred to the acceptor end of tRNA(Pro). As ProRS can inadvertently accommodate and process non-cognate amino acids such as alanine and cysteine, to avoid such errors it has two additional distinct editing activities against alanine. One activity is designated as 'pretransfer' editing and involves the tRNA(Pro)-independent hydrolysis of activated Ala-AMP. The other activity is designated 'posttransfer' editing and involves deacylation of mischarged Ala-tRNA(Pro). The misacylated Cys-tRNA(Pro) is not edited by ProRS. In Kocuria rhizophila (strain ATCC 9341 / DSM 348 / NBRC 103217 / DC2201), this protein is Proline--tRNA ligase.